A 314-amino-acid polypeptide reads, in one-letter code: Vacuolar membrane protein FOSTERSB_4073 (314 aa).

The disordered stretch occupies residues 32 to 60 (KPTSSVVSETSSKSLPSLTSSAFSTSSGA). The chain crosses the membrane as a helical span at residues 93 to 113 (VYIAVGAVIGAIFISILIWWL). Phosphoserine is present on residues Ser148, Ser254, and Ser274. A disordered region spans residues 240-309 (EERKLNLNRP…PSMFLDDVLN (70 aa)). The span at 254–269 (SPERKEKKINSMEGYH) shows a compositional bias: basic and acidic residues.

The protein belongs to the PRM5 family.

It is found in the vacuole membrane. In Saccharomyces cerevisiae (strain FostersB) (Baker's yeast), this protein is Vacuolar membrane protein FOSTERSB_4073.